A 252-amino-acid polypeptide reads, in one-letter code: N-acetylglucosaminyl-phosphatidylinositol de-N-acetylase (252 aa).

A helical transmembrane segment spans residues 2–22 (ELVGFLCVAVAVLTWGFLRVW). Over 23–252 (NSAERMRSPE…YMRINSLRFL (230 aa)) the chain is Cytoplasmic.

The protein belongs to the PIGL family.

Its subcellular location is the endoplasmic reticulum membrane. The enzyme catalyses a 6-(N-acetyl-alpha-D-glucosaminyl)-1-(1,2-diacyl-sn-glycero-3-phospho)-1D-myo-inositol + H2O = a 6-(alpha-D-glucosaminyl)-1-(1,2-diacyl-sn-glycero-3-phospho)-1D-myo-inositol + acetate. It functions in the pathway glycolipid biosynthesis; glycosylphosphatidylinositol-anchor biosynthesis. Catalyzes the second step of glycosylphosphatidylinositol (GPI) biosynthesis, which is the de-N-acetylation of N-acetylglucosaminyl-phosphatidylinositol. This is N-acetylglucosaminyl-phosphatidylinositol de-N-acetylase (Pigl) from Mus musculus (Mouse).